The primary structure comprises 64 residues: Large ribosomal subunit protein bL35 (64 aa).

A compositionally biased stretch (basic residues) spans 1-14; the sequence is MKQKTHKGTAKRVK. Positions 1 to 50 are disordered; it reads MKQKTHKGTAKRVKITGSGKLRREQANRRHLLEGKPSKRTRRLKGTEDVA. A compositionally biased stretch (basic and acidic residues) spans 21–36; the sequence is LRREQANRRHLLEGKP.

It belongs to the bacterial ribosomal protein bL35 family.

In Corynebacterium diphtheriae (strain ATCC 700971 / NCTC 13129 / Biotype gravis), this protein is Large ribosomal subunit protein bL35.